The following is a 350-amino-acid chain: Guanine nucleotide-binding protein G(t) subunit alpha-1 (350 aa).

The segment at 1–21 (MGAGASAEEKHSRELEKKLKE) is disordered. G2 is lipidated: N-myristoyl glycine. Basic and acidic residues predominate over residues 7-21 (AEEKHSRELEKKLKE). One can recognise a G-alpha domain in the interval 28-350 (RTVKLLLLGA…KENLKDCGLF (323 aa)). Residues 31–44 (KLLLLGAGESGKST) are G1 motif. 36-43 (GAGESGKS) contributes to the GTP binding site. Residue S43 coordinates Mg(2+). Residue Y142 is modified to Phosphotyrosine. GTP is bound by residues D146, 171 to 177 (LRSRVKT), G199, 265 to 268 (NKKD), and A322. Positions 169–177 (DVLRSRVKT) are G2 motif. Mg(2+) is bound at residue T177. The interval 192–201 (FRMFDVGGQR) is G3 motif. Residues 261–268 (VLFLNKKD) form a G4 motif region. The G5 motif stretch occupies residues 320-325 (TCATDT). The interaction with RHO stretch occupies residues 340–350 (IKENLKDCGLF).

Belongs to the G-alpha family. G(i/o/t/z) subfamily. Heterotrimeric G proteins are composed of 3 subunits alpha, beta and gamma. The alpha chain contains the guanine nucleotide binding site. Interacts with RHO. Interacts with RGS9 and PDE6G. Interacts (when myristoylated) with UNC119; interaction is required for localization in sensory neurons. In the retina, expressed in the rod photoreceptors.

Its subcellular location is the cell projection. It localises to the cilium. The protein resides in the photoreceptor outer segment. The protein localises to the membrane. It is found in the photoreceptor inner segment. In terms of biological role, functions as a signal transducer for the rod photoreceptor RHO. Required for normal RHO-mediated light perception by the retina. Guanine nucleotide-binding proteins (G proteins) function as transducers downstream of G protein-coupled receptors (GPCRs), such as the photoreceptor RHO. The alpha chain contains the guanine nucleotide binding site and alternates between an active, GTP-bound state and an inactive, GDP-bound state. Activated RHO promotes GDP release and GTP binding. Signaling is mediated via downstream effector proteins, such as cGMP-phosphodiesterase. The polypeptide is Guanine nucleotide-binding protein G(t) subunit alpha-1 (Gnat1) (Mus musculus (Mouse)).